The sequence spans 140 residues: Nucleoside diphosphate kinase (140 aa).

The ATP site is built by Lys-11, Phe-59, Arg-87, Thr-93, Arg-104, and Asn-114. Catalysis depends on His-117, which acts as the Pros-phosphohistidine intermediate.

This sequence belongs to the NDK family. Homotetramer. It depends on Mg(2+) as a cofactor.

It is found in the cytoplasm. It carries out the reaction a 2'-deoxyribonucleoside 5'-diphosphate + ATP = a 2'-deoxyribonucleoside 5'-triphosphate + ADP. The catalysed reaction is a ribonucleoside 5'-diphosphate + ATP = a ribonucleoside 5'-triphosphate + ADP. Functionally, major role in the synthesis of nucleoside triphosphates other than ATP. The ATP gamma phosphate is transferred to the NDP beta phosphate via a ping-pong mechanism, using a phosphorylated active-site intermediate. This chain is Nucleoside diphosphate kinase, found in Beijerinckia indica subsp. indica (strain ATCC 9039 / DSM 1715 / NCIMB 8712).